Reading from the N-terminus, the 661-residue chain is UvrABC system protein C (661 aa).

Positions 26-105 (AEPGCYLMRD…IKNHQPHFNV (80 aa)) constitute a GIY-YIG domain. In terms of domain architecture, UVR spans 215–250 (DELQNLLQEQMHKYADRTDYESAARVRDQLQGLDQL).

The protein belongs to the UvrC family. Interacts with UvrB in an incision complex.

Its subcellular location is the cytoplasm. Its function is as follows. The UvrABC repair system catalyzes the recognition and processing of DNA lesions. UvrC both incises the 5' and 3' sides of the lesion. The N-terminal half is responsible for the 3' incision and the C-terminal half is responsible for the 5' incision. This chain is UvrABC system protein C, found in Synechococcus sp. (strain CC9902).